A 261-amino-acid polypeptide reads, in one-letter code: Indole-3-glycerol phosphate synthase (261 aa).

This sequence belongs to the TrpC family.

It catalyses the reaction 1-(2-carboxyphenylamino)-1-deoxy-D-ribulose 5-phosphate + H(+) = (1S,2R)-1-C-(indol-3-yl)glycerol 3-phosphate + CO2 + H2O. It functions in the pathway amino-acid biosynthesis; L-tryptophan biosynthesis; L-tryptophan from chorismate: step 4/5. The protein is Indole-3-glycerol phosphate synthase of Campylobacter concisus (strain 13826).